The chain runs to 611 residues: Chaperone protein DnaK (611 aa).

The residue at position 173 (T173) is a Phosphothreonine; by autocatalysis. Low complexity predominate over residues 577–592; it reads QAAAGQAEGAEGAQDA. A disordered region spans residues 577-598; the sequence is QAAAGQAEGAEGAQDAGAKKDN.

Belongs to the heat shock protein 70 family.

Its function is as follows. Acts as a chaperone. The protein is Chaperone protein DnaK of Bacillus anthracis (strain A0248).